Here is a 686-residue protein sequence, read N- to C-terminus: Pentatricopeptide repeat-containing protein 1, mitochondrial (686 aa).

Polar residues predominate over residues 55–67 (RMSSLCSDSSTPV). Positions 55 to 79 (RMSSLCSDSSTPVAPQEEEEEESFG) are disordered. PPR repeat units lie at residues 124–160 (TPYW…RLQP), 161–195 (LECN…DLEP), 196–234 (SDAT…NFQL), 235–269 (NLKT…GHAV), and 270–306 (TEET…GIKP). The tract at residues 383–407 (KLEGPPAFPEARETSRTQPEVETKA) is disordered. Residues 392 to 407 (EARETSRTQPEVETKA) are compositionally biased toward basic and acidic residues. 2 PPR repeats span residues 508-542 (DITF…GIVP) and 575-609 (NTHI…SVPV).

The protein belongs to the PTCD1 family. Associates with mitochondrial leucine tRNAs. Interacts with ELAC2.

It localises to the mitochondrion matrix. Functionally, mitochondrial protein implicated in negative regulation of leucine tRNA levels, as well as negative regulation of mitochondria-encoded proteins and COX activity. Also affects the 3'-processing of mitochondrial tRNAs. This chain is Pentatricopeptide repeat-containing protein 1, mitochondrial (Ptcd1), found in Rattus norvegicus (Rat).